The primary structure comprises 503 residues: UDP-N-acetylmuramate--L-alanine ligase (503 aa).

120–126 (GTHGKTS) provides a ligand contact to ATP.

The protein belongs to the MurCDEF family.

The protein resides in the cytoplasm. The catalysed reaction is UDP-N-acetyl-alpha-D-muramate + L-alanine + ATP = UDP-N-acetyl-alpha-D-muramoyl-L-alanine + ADP + phosphate + H(+). It functions in the pathway cell wall biogenesis; peptidoglycan biosynthesis. Cell wall formation. This chain is UDP-N-acetylmuramate--L-alanine ligase, found in Rhodococcus opacus (strain B4).